We begin with the raw amino-acid sequence, 146 residues long: Anti-sigma F factor (146 aa).

It belongs to the anti-sigma-factor family.

The catalysed reaction is L-seryl-[protein] + ATP = O-phospho-L-seryl-[protein] + ADP + H(+). It catalyses the reaction L-threonyl-[protein] + ATP = O-phospho-L-threonyl-[protein] + ADP + H(+). Binds to sigma F and blocks its ability to form an RNA polymerase holoenzyme (E-sigma F). Phosphorylates SpoIIAA on a serine residue. This phosphorylation may enable SpoIIAA to act as an anti-anti-sigma factor that counteracts SpoIIAB and thus releases sigma F from inhibition. This chain is Anti-sigma F factor (spoIIAB), found in Bacillus subtilis (strain 168).